Consider the following 88-residue polypeptide: Small ribosomal subunit protein bS20 (88 aa).

This sequence belongs to the bacterial ribosomal protein bS20 family.

Functionally, binds directly to 16S ribosomal RNA. This is Small ribosomal subunit protein bS20 from Brucella abortus (strain S19).